A 296-amino-acid chain; its full sequence is L-ornithine N(alpha)-acyltransferase (296 aa).

It belongs to the acetyltransferase family. OlsB subfamily.

The enzyme catalyses a (3R)-hydroxyacyl-[ACP] + L-ornithine = a lyso-ornithine lipid + holo-[ACP] + H(+). It participates in lipid metabolism. Functionally, catalyzes the first step in the biosynthesis of ornithine lipids, which are phosphorus-free membrane lipids. Catalyzes the 3-hydroxyacyl-acyl carrier protein-dependent acylation of ornithine to form lyso-ornithine lipid (LOL). The protein is L-ornithine N(alpha)-acyltransferase of Rhizobium meliloti (strain 1021) (Ensifer meliloti).